The following is a 132-amino-acid chain: Hemoglobin subunit beta-1 (132 aa).

The 132-residue stretch at 1 to 132 folds into the Globin domain; sequence WSKIDIDVCG…VVSALGRQYH (132 aa). H49 and H78 together coordinate heme b.

The protein belongs to the globin family. Hb 1 is a heterotetramer of two alpha-1 and two beta-1 chains. Hb 2 is a heterotetramer of two alpha-2 and two beta-1 chains. As to expression, red blood cells.

Involved in oxygen transport from gills to the various peripheral tissues. The protein is Hemoglobin subunit beta-1 (hbb1) of Arctogadus glacialis (Arctic cod).